Reading from the N-terminus, the 143-residue chain is Photosystem II extrinsic protein U (143 aa).

An N-terminal signal peptide occupies residues 1 to 29 (MKRLVGVLMILGLMLTSWGLLGSPQTAIA). A propeptide spanning residues 30–44 (ASLSPLSFNPSPVLA) is cleaved from the precursor.

It belongs to the PsbU family. PSII is composed of 1 copy each of membrane proteins PsbA, PsbB, PsbC, PsbD, PsbE, PsbF, PsbH, PsbI, PsbJ, PsbK, PsbL, PsbM, PsbT, PsbX, PsbY, PsbZ, Psb30/Ycf12, peripheral proteins PsbO, CyanoQ (PsbQ), PsbU, PsbV and a large number of cofactors. It forms dimeric complexes.

It localises to the cellular thylakoid membrane. One of the extrinsic, lumenal subunits of photosystem II (PSII). PSII is a light-driven water plastoquinone oxidoreductase, using light energy to abstract electrons from H(2)O, generating a proton gradient subsequently used for ATP formation. The extrinsic proteins stabilize the structure of photosystem II oxygen-evolving complex (OEC), the ion environment of oxygen evolution and protect the OEC against heat-induced inactivation. The sequence is that of Photosystem II extrinsic protein U from Leptolyngbya laminosa (Phormidium laminosum).